Here is a 149-residue protein sequence, read N- to C-terminus: Transcriptional repressor NrdR (149 aa).

The segment at 3–34 (CPFCFAVDTKVIDSRLVGEGSSVRRRRQCLVC) is a zinc-finger region. An ATP-cone domain is found at 49–139 (PRVVKSNDVR…VYRSFEDIRE (91 aa)).

This sequence belongs to the NrdR family. Zn(2+) is required as a cofactor.

In terms of biological role, negatively regulates transcription of bacterial ribonucleotide reductase nrd genes and operons by binding to NrdR-boxes. The chain is Transcriptional repressor NrdR from Cronobacter sakazakii (strain ATCC BAA-894) (Enterobacter sakazakii).